The primary structure comprises 199 residues: Glycerol-3-phosphate acyltransferase (199 aa).

Transmembrane regions (helical) follow at residues 3-23 (YILI…YLLP), 50-70 (VIGF…VLVF), 77-97 (IHYT…PVFL), 110-130 (GVFF…WISI), and 136-156 (YVSL…FFFN).

The protein belongs to the PlsY family. Probably interacts with PlsX.

It localises to the cell inner membrane. It catalyses the reaction an acyl phosphate + sn-glycerol 3-phosphate = a 1-acyl-sn-glycero-3-phosphate + phosphate. It functions in the pathway lipid metabolism; phospholipid metabolism. Its function is as follows. Catalyzes the transfer of an acyl group from acyl-phosphate (acyl-PO(4)) to glycerol-3-phosphate (G3P) to form lysophosphatidic acid (LPA). This enzyme utilizes acyl-phosphate as fatty acyl donor, but not acyl-CoA or acyl-ACP. The protein is Glycerol-3-phosphate acyltransferase of Pseudothermotoga lettingae (strain ATCC BAA-301 / DSM 14385 / NBRC 107922 / TMO) (Thermotoga lettingae).